The primary structure comprises 380 residues: Glucose-1-phosphate adenylyltransferase (380 aa).

Alpha-D-glucose 1-phosphate contacts are provided by residues glycine 164, 179-180 (EK), and serine 190.

It belongs to the bacterial/plant glucose-1-phosphate adenylyltransferase family. Homotetramer.

The catalysed reaction is alpha-D-glucose 1-phosphate + ATP + H(+) = ADP-alpha-D-glucose + diphosphate. It participates in glycan biosynthesis; glycogen biosynthesis. Functionally, involved in the biosynthesis of ADP-glucose, a building block required for the elongation reactions to produce glycogen. Catalyzes the reaction between ATP and alpha-D-glucose 1-phosphate (G1P) to produce pyrophosphate and ADP-Glc. This Streptococcus gordonii (strain Challis / ATCC 35105 / BCRC 15272 / CH1 / DL1 / V288) protein is Glucose-1-phosphate adenylyltransferase.